The primary structure comprises 166 residues: Xanthine-guanine phosphoribosyltransferase (166 aa).

Residues 42 to 43 (RG) and 99 to 107 (DDLTDTGKT) contribute to the 5-phospho-alpha-D-ribose 1-diphosphate site. D100 contributes to the Mg(2+) binding site. 2 residues coordinate guanine: D103 and I146. D103 and I146 together coordinate xanthine. GMP-binding positions include 103-107 (DTGKT) and 145-146 (WI).

The protein belongs to the purine/pyrimidine phosphoribosyltransferase family. XGPT subfamily. In terms of assembly, homotetramer. The cofactor is Mg(2+).

It is found in the cell inner membrane. The enzyme catalyses GMP + diphosphate = guanine + 5-phospho-alpha-D-ribose 1-diphosphate. It catalyses the reaction XMP + diphosphate = xanthine + 5-phospho-alpha-D-ribose 1-diphosphate. The catalysed reaction is IMP + diphosphate = hypoxanthine + 5-phospho-alpha-D-ribose 1-diphosphate. Its pathway is purine metabolism; GMP biosynthesis via salvage pathway; GMP from guanine: step 1/1. The protein operates within purine metabolism; XMP biosynthesis via salvage pathway; XMP from xanthine: step 1/1. In terms of biological role, purine salvage pathway enzyme that catalyzes the transfer of the ribosyl-5-phosphate group from 5-phospho-alpha-D-ribose 1-diphosphate (PRPP) to the N9 position of the 6-oxopurines guanine and xanthine to form the corresponding ribonucleotides GMP (guanosine 5'-monophosphate) and XMP (xanthosine 5'-monophosphate), with the release of PPi. To a lesser extent, also acts on hypoxanthine. The chain is Xanthine-guanine phosphoribosyltransferase from Mesorhizobium japonicum (strain LMG 29417 / CECT 9101 / MAFF 303099) (Mesorhizobium loti (strain MAFF 303099)).